The sequence spans 214 residues: Epoxide hydrolase EphH (214 aa).

The Nucleophile role is filled by Ser28. Catalysis depends on charge relay system residues Asp156 and His186.

Belongs to the AB hydrolase superfamily.

It carries out the reaction an epoxide + H2O = an ethanediol. Inhibited by AUDA, a known epoxide hydrolase inhibitor. In terms of biological role, catalyzes the hydrolysis of epoxide-containing substrates. In vitro, catalyzes the hydrolysis of the synthetic compounds PHOME and styrene oxide. Plays an essential role in subverting phagosomal acidification. Plays a major role in the survival of M.tuberculosis (Mtb) during in vitro acidic stress and protects Mtb in response to phagosomal acidification inside macrophages. Also supports Mtb growth under the nutrient-deprived condition at pH 7.0. This is Epoxide hydrolase EphH from Mycobacterium tuberculosis (strain ATCC 25618 / H37Rv).